The primary structure comprises 109 residues: Large ribosomal subunit protein P1 (109 aa).

Positions 71–109 (APAAASSAPAKKEEPKKEEPKKEEPKEEETDMDMGDLFG) are disordered. Residues 80 to 95 (AKKEEPKKEEPKKEEP) show a composition bias toward basic and acidic residues. Repeat copies occupy residues 81–85 (KKEEP), 86–90 (KKEEP), and 91–95 (KKEEP). The interval 81–95 (KKEEPKKEEPKKEEP) is 3 X 5 AA tandem repeats of K-K-E-E-P. The segment covering 96–109 (KEEETDMDMGDLFG) has biased composition (acidic residues).

This sequence belongs to the eukaryotic ribosomal protein P1/P2 family. In terms of processing, not phosphorylated.

This is Large ribosomal subunit protein P1 (RPLP1) from Tetrahymena thermophila.